We begin with the raw amino-acid sequence, 226 residues long: Histone H1.5 (226 aa).

Over residues 1-16 (MSETAPAETATPAPVE) the composition is skewed to low complexity. The disordered stretch occupies residues 1–44 (MSETAPAETATPAPVEKSPAKKKATKKAAGAGAAKRKATGPPVS). S2 is modified (N-acetylserine; partial). The residue at position 2 (S2) is a Phosphoserine. The residue at position 11 (T11) is a Phosphothreonine; by GSK3. An N6-acetyllysine modification is found at K17. S18 carries the post-translational modification Phosphoserine. The residue at position 27 (K27) is an N6-methyllysine. Residue K37 is modified to N6-(beta-hydroxybutyryl)lysine; alternate. K37 carries the N6-succinyllysine; alternate modification. T39 carries the post-translational modification Phosphothreonine. The 74-residue stretch at 39-112 (TGPPVSELIT…GASGSFKLNK (74 aa)) folds into the H15 domain. An N6-acetyllysine modification is found at K49. Position 55 is an N6-(beta-hydroxybutyryl)lysine (K55). Citrulline is present on R57. K67 is modified (N6-(beta-hydroxybutyryl)lysine). The residue at position 78 (K78) is an N6-acetyllysine. 3 positions are modified to N6-(beta-hydroxybutyryl)lysine: K88, K93, and K109. The interval 98–226 (QTKGTGASGS…KAKKAAAKKK (129 aa)) is disordered. The segment covering 122 to 133 (KAKKAGAAKAKK) has biased composition (basic residues). Phosphothreonine is present on residues T138 and T155. Residues 140–161 (KKAKKAAGAKKAVKKTPKKAKK) are compositionally biased toward basic residues. Position 168 is an N6-acetyllysine (K168). A compositionally biased stretch (basic residues) spans 169–187 (KVAKSPKKAKAAAKPKKAT). Phosphoserine is present on residues S173 and S189. Basic residues predominate over residues 194-226 (KAVKPKAAKPKAAKPKAAKPKAAKAKKAAAKKK).

Belongs to the histone H1/H5 family. As to quaternary structure, interacts with MSX1. In terms of processing, H1 histones are progressively phosphorylated during the cell cycle, becoming maximally phosphorylated during late G2 phase and M phase, and being dephosphorylated sharply thereafter. Phosphorylated at Thr-11 by GSK3B during mitosis in prometaphase and dephosphorylated in telophase. Citrullination at Arg-57 (H1R54ci) by PADI4 takes place within the DNA-binding site of H1 and results in its displacement from chromatin and global chromatin decondensation, thereby promoting pluripotency and stem cell maintenance. Ubiquitous. Expressed in the majority of the cell lines tested and in testis.

The protein localises to the nucleus. The protein resides in the chromosome. Functionally, histone H1 protein binds to linker DNA between nucleosomes forming the macromolecular structure known as the chromatin fiber. Histones H1 are necessary for the condensation of nucleosome chains into higher-order structured fibers. Also acts as a regulator of individual gene transcription through chromatin remodeling, nucleosome spacing and DNA methylation. This Homo sapiens (Human) protein is Histone H1.5.